The primary structure comprises 312 residues: MFKHETVLLHETVDMLEVKPDGIYVDATLGGAGHSEYLLNKLNEKGHLFAFDQDQTAIDNAKIKLADYSDKVTFIKANFRDMKEALNERGIEAVDGILYDLGVSSPQLDERERGFSYHQDAALDMRMDQEQELTAKIVVNEWSYQDLIRIFFQYGEEKFSKQIAREIERRREVKPIETTGELVDIIKTAIPAPARRKGGHPGKRTFQAIRIAVNDELGAVEDSLEKALTLLKPGGRISVITFHSLEDRITKHLFQEATKGPDLPPGLPVIPDEYKPDFKLATRKPIVPSEEELEQNNRARSAKLRVIEKIIK.

S-adenosyl-L-methionine-binding positions include 32–34 (AGH), Asp52, Phe79, Asp100, and Gln107.

The protein belongs to the methyltransferase superfamily. RsmH family.

It is found in the cytoplasm. The catalysed reaction is cytidine(1402) in 16S rRNA + S-adenosyl-L-methionine = N(4)-methylcytidine(1402) in 16S rRNA + S-adenosyl-L-homocysteine + H(+). Functionally, specifically methylates the N4 position of cytidine in position 1402 (C1402) of 16S rRNA. The protein is Ribosomal RNA small subunit methyltransferase H of Listeria monocytogenes serotype 4b (strain CLIP80459).